The following is a 262-amino-acid chain: Serine/arginine-rich splicing factor 10 (262 aa).

Residues 10 to 88 enclose the RRM domain; the sequence is TSLFVRNVAD…RQIEIQFAQG (79 aa). Residues Ser23, Ser106, and Ser108 each carry the phosphoserine modification. Residues 116–126 show a composition bias toward basic and acidic residues; the sequence is YRRSRSRSYER. The tract at residues 116–262 is disordered; the sequence is YRRSRSRSYE…SWTSPKSSGH (147 aa). Phosphoserine is present on residues Ser129, Ser131, and Ser133. Low complexity predominate over residues 134–150; that stretch reads FDYNYRRSYSPRNSRPT. Phosphoserine is present on residues Ser158, Ser160, and Arg168. Composition is skewed to basic residues over residues 165-186 and 194-207; these read FKHR…SKSQ and KSRS…KTRG. Residues 209–234 show a composition bias toward basic and acidic residues; the sequence is SKTDSKTHYKSGSRYEKESRKKEPPR. Positions 252–262 are enriched in low complexity; sequence RSWTSPKSSGH.

This sequence belongs to the splicing factor SR family. The phosphorylated but not the dephosphorylated form interacts with TRA2B/SFRS10. The dephosphorylated form interacts with SNRNP70. Isoform 1 interacts with FUS C-terminus. Isoform 3 interacts with FUS C-terminus. Interacts with YTHDC1, leading to inhibit RNA-binding activity of SRSF10. In terms of processing, phosphorylated. Fully dephosphorylated in mitosis and partially dephosphorylated on heat shock. As to expression, widely expressed.

Its subcellular location is the nucleus speckle. The protein localises to the cytoplasm. Functionally, splicing factor that in its dephosphorylated form acts as a general repressor of pre-mRNA splicing. Seems to interfere with the U1 snRNP 5'-splice recognition of SNRNP70. Required for splicing repression in M-phase cells and after heat shock. Also acts as a splicing factor that specifically promotes exon skipping during alternative splicing. Interaction with YTHDC1, a RNA-binding protein that recognizes and binds N6-methyladenosine (m6A)-containing RNAs, prevents SRSF10 from binding to its mRNA-binding sites close to m6A-containing regions, leading to inhibit exon skipping during alternative splicing. May be involved in regulation of alternative splicing in neurons, with isoform 1 acting as a positive and isoform 3 as a negative regulator. This chain is Serine/arginine-rich splicing factor 10 (SRSF10), found in Homo sapiens (Human).